Reading from the N-terminus, the 1224-residue chain is MKSFLNKNKNSKKIIILDDNDFSKYQQRYDLQNQNIEIVSSPLQNIRSQQINDGVQMSGSIQSDLSSSDNFTSSGGFGGGGNSSSNTSNRNSDNSTQRPLMVDIGLEYKYRLALEQNPNDFKALVKWGSLIYKNIKNQMGGKHVDVCLMDWNEELIPIPQNNNNHHNHNHHNNHTSGNFTGNINSNTTLSNSFFETLNSFNLREPLFDVCGKYQSSLQLSGGSNLLNIPFSTLLNYNLNEQLNILVNNLNNSSPSSSSSSIKTKNTTSTTTTTTTTKNLNDISNNINNSRVLRSVSLPPAPPPPPTEDPNSPWSDPILWMKWGDCLFLLCTYLELPMYRATCEKYFKCIQILFKQQEKQHQQQQQQQQNQQDKEKFEKQNNYNIKLLAIVLRKWGITLSRYSRRMKSQFLMSEWTSDENIQVEELWKVLHSQSIQSLLISNKISPSLVTQYHLATAYHRHAITLNQFGCQSKEEIYGLITNSCKIYYETLLESLSDTFLQQLQLQQQQQPWHDIEYYNNNEIFNDQFKSKSLENWGRALDVQLSTKLNDEEETIEKEEEDLNSVDEYLTTFSKSVLKGVTPSLEGVVSLCLNSKQALQYKAINSVSVLCRSSEIVKSPIYNELMDQMTKVESFVSKRDDAESLLSQQKTLKSMPPKLQAYVRMSGLGEEEIMRNFEIAWNSIYFLTKDTIPNQPIPPNYYRSNKKNKLKQRQLNDSNNQDEKEEPEEIKPPLLPSIHRTNQLNNNNNNNNNINNNNINNNNINNNKNGNSGGETPSPSSSFVITPFTSNSQSKFNTQRQFLSNSTLFNLSSSGIFTNNNNNNNGGSTITTTTTNNISPTKTNGWTLTLPSKAPTRRATVSLININDLINQQQQNQINSVSTLSQNNIILNNNNNLDNKPISKYIPNSIIRTTVNPPLLSRCDETIFSSGTPLPLFRDKIKLGTGAFGNVFYAIRKSDSSPVAIKVLMERTKKDSPIIPELYIHSACNHSNIVTYIESYLCKGHVWIILEYCDGGTVRDLLQATCTPGNPNNLQLFEETLIAYIITELLEGLVYLRSKGIIHRDLKSRNILLTRKGKVKIADFGLATTCSLGRGRTRMCGTMGRIAPEVIRREPYDTQSDIYSLGCLIIEMAEGTVPYGKDSSLKALFYTAIHQYKLPNPKKYTKEFVDFLYLCLNPDPFKRPTPEMLLHHTFLSGADRGKSILLGRFKNQDTRKNLLLDNFVAF.

Disordered stretches follow at residues 57–98 (MSGS…STQR) and 252–284 (SSPSSSSSSIKTKNTTSTTTTTTTTKNLNDISN). 2 stretches are compositionally biased toward low complexity: residues 58 to 74 (SGSIQSDLSSSDNFTSS) and 83 to 95 (SSSNTSNRNSDNS). 2 coiled-coil regions span residues 352 to 381 (LFKQQEKQHQQQQQQQQNQQDKEKFEKQNN) and 540 to 569 (DVQLSTKLNDEEETIEKEEEDLNSVDEYLT). Disordered stretches follow at residues 693 to 784 (QPIP…FVIT) and 815 to 836 (FTNNNNNNNGGSTITTTTTNNI). Residues 743–768 (NNNNNNNNNINNNNINNNNINNNKNG) are compositionally biased toward low complexity. A compositionally biased stretch (polar residues) spans 772-784 (GETPSPSSSFVIT). The region spanning 935-1193 (FRDKIKLGTG…PEMLLHHTFL (259 aa)) is the Protein kinase domain. ATP is bound by residues 941 to 949 (LGTGAFGNV) and Lys964. Asp1063 serves as the catalytic Proton acceptor.

Belongs to the protein kinase superfamily. Ser/Thr protein kinase family. Mg(2+) is required as a cofactor.

It catalyses the reaction L-seryl-[protein] + ATP = O-phospho-L-seryl-[protein] + ADP + H(+). The catalysed reaction is L-threonyl-[protein] + ATP = O-phospho-L-threonyl-[protein] + ADP + H(+). This is Probable serine/threonine-protein kinase DDB_G0292350 from Dictyostelium discoideum (Social amoeba).